The sequence spans 215 residues: uncharacterized protein (215 aa).

Catalysis depends on charge relay system residues Ser114, Asp162, and His194.

It belongs to the AB hydrolase superfamily. AB hydrolase 2 family.

This is an uncharacterized protein from Rickettsia prowazekii (strain Madrid E).